The sequence spans 397 residues: Probable pyruvate dehydrogenase E1 component subunit alpha, mitochondrial (397 aa).

The pyruvate site is built by histidine 86, tyrosine 112, arginine 113, glycine 159, valine 161, aspartate 190, glycine 191, alanine 192, and asparagine 219. Thiamine diphosphate is bound by residues tyrosine 112, arginine 113, glycine 159, valine 161, aspartate 190, glycine 191, alanine 192, asparagine 219, and histidine 286. Residue aspartate 190 participates in Mg(2+) binding. Position 219 (asparagine 219) interacts with Mg(2+).

Tetramer of 2 alpha and 2 beta subunits. The cofactor is thiamine diphosphate. Mg(2+) is required as a cofactor.

The protein localises to the mitochondrion matrix. The catalysed reaction is N(6)-[(R)-lipoyl]-L-lysyl-[protein] + pyruvate + H(+) = N(6)-[(R)-S(8)-acetyldihydrolipoyl]-L-lysyl-[protein] + CO2. E1 activity is regulated by phosphorylation (inactivation) and dephosphorylation (activation) of the alpha subunit. In terms of biological role, the pyruvate dehydrogenase complex catalyzes the overall conversion of pyruvate to acetyl-CoA and CO(2). It contains multiple copies of three enzymatic components: pyruvate dehydrogenase (E1), dihydrolipoamide acetyltransferase (E2) and lipoamide dehydrogenase (E3). The sequence is that of Probable pyruvate dehydrogenase E1 component subunit alpha, mitochondrial from Caenorhabditis elegans.